A 332-amino-acid polypeptide reads, in one-letter code: Putative D-threonate 4-phosphate dehydrogenase (332 aa).

Substrate contacts are provided by His-140 and Thr-141. A divalent metal cation contacts are provided by His-170, His-214, and His-270. Positions 278, 287, and 296 each coordinate substrate.

It belongs to the PdxA family. PdxA2 subfamily. As to quaternary structure, homodimer. The cofactor is a divalent metal cation.

The catalysed reaction is 4-O-phospho-D-threonate + NAD(+) = dihydroxyacetone phosphate + CO2 + NADH. Catalyzes the NAD-dependent oxidation and subsequent decarboxylation of D-threonate 4-phosphate to produce dihydroxyacetone phosphate (DHAP). This chain is Putative D-threonate 4-phosphate dehydrogenase, found in Oceanobacillus iheyensis (strain DSM 14371 / CIP 107618 / JCM 11309 / KCTC 3954 / HTE831).